The chain runs to 296 residues: Malate--CoA ligase subunit alpha (296 aa).

Residues 17–20 (TGDK), Lys-43, and 96–98 (ITD) contribute to the CoA site. His-251 functions as the Tele-phosphohistidine intermediate in the catalytic mechanism.

It belongs to the succinate/malate CoA ligase alpha subunit family. As to quaternary structure, heterotetramer of two alpha and two beta subunits.

The enzyme catalyses (S)-malate + ATP + CoA = (S)-malyl-CoA + ADP + phosphate. The protein operates within one-carbon metabolism; formaldehyde assimilation via serine pathway. The protein is Malate--CoA ligase subunit alpha (mtkB) of Methylorubrum extorquens (strain ATCC 14718 / DSM 1338 / JCM 2805 / NCIMB 9133 / AM1) (Methylobacterium extorquens).